The primary structure comprises 109 residues: Iron-sulfur cluster assembly protein CyaY (109 aa).

It belongs to the frataxin family.

In terms of biological role, involved in iron-sulfur (Fe-S) cluster assembly. May act as a regulator of Fe-S biogenesis. In Shewanella baltica (strain OS155 / ATCC BAA-1091), this protein is Iron-sulfur cluster assembly protein CyaY.